A 603-amino-acid polypeptide reads, in one-letter code: MVLRLSQLFLRTLREDPVDAEVDSHKLLVRAGYIRRAAPGIYTWLPLGLSVLRKVEDIIRQEMSAIGAQEVHFPALLPREPYEATNRWTEYGEGLFRLQDRKGADYLLAPTHEEMFTLLVKDLYSSYKDLPLSLYQIQNKYRDEARPRAGLLRGREFIMKDSYSFDIDDAGLDASYAAHRAAYLKIFERLGLEVIPVAATAGAMGGSKSEEFLFPTEIGEDTFVRSAGGYYANVEAVTTVVPDEIDFSNAPAAEVLDTPNTPTIDTLVDAANQLAPRSESDGGAWTAADTLKNVVLAVTLPTGERQIVVIGVPGDRGVDLKRVEANIGSHLPIAGEIGLEAANEEDLKKLPWLVKGYIGPGLSLDEPVLGLEGSSKVLFLVDPRVVSGTTWVTGANAEGKHVFGLVAGRDFVWDGVIESTEVRAGDPAPDGSGPLETARGIEMGHIFQLGRKYAEALDLKVLDQNGKQQVVTMGSYGVGVTRAVAALAEANNDDRGLVWPRSVAPADVHVVAVGRGDEIFEAAEKLSLELEAAGLDVIFDDRPKVSPGVKFGDAELVGVPTILAVGRGLVDGVVEIKDRRSGEAENISVDKAVDYVVNAVRTR.

The protein belongs to the class-II aminoacyl-tRNA synthetase family. ProS type 1 subfamily. As to quaternary structure, homodimer.

The protein resides in the cytoplasm. The enzyme catalyses tRNA(Pro) + L-proline + ATP = L-prolyl-tRNA(Pro) + AMP + diphosphate. Catalyzes the attachment of proline to tRNA(Pro) in a two-step reaction: proline is first activated by ATP to form Pro-AMP and then transferred to the acceptor end of tRNA(Pro). As ProRS can inadvertently accommodate and process non-cognate amino acids such as alanine and cysteine, to avoid such errors it has two additional distinct editing activities against alanine. One activity is designated as 'pretransfer' editing and involves the tRNA(Pro)-independent hydrolysis of activated Ala-AMP. The other activity is designated 'posttransfer' editing and involves deacylation of mischarged Ala-tRNA(Pro). The misacylated Cys-tRNA(Pro) is not edited by ProRS. This Paenarthrobacter aurescens (strain TC1) protein is Proline--tRNA ligase.